We begin with the raw amino-acid sequence, 440 residues long: MSYFEHIPAIRYEGPQSDNPLAYHHYDPAKRVLGKTLAEHLRIAVCYWHTFVWPGHDMFGQGTFVRPWQQPGDPLERARMKADAAFEFFSKLGTPFYTFHDTDVAPEGDNLREYTANFARMVDYLGERQQASGVRLLWGTANLFSHPRFAAGAATNPNPDVFAWAATQVRHALDATHRLGGENYVLWGGREGYETLLNTDLKRERDQFARFLSMVVEHKHRIGFNGALLIEPKPQEPTKHQYDYDVATVHGFLVQYGLQDEIRVNIEANHATLAGHSFHHEIANAFALGVFGSVDANRGDPQNGWDTDQFPNSVEELTLAFYEILRHGGFTTGGMNFDAKVRRQSVAAEDLFYGHVGAIDVLALALERAAVLVENDRLDALRRQRYAQWDDAFGRKILSGGYTLQSLADDALARGVNPQHVSGAQERLENIVNQAIYALR.

Residues H100 and D103 contribute to the active site. Residues E231, E267, H270, D295, D306, D308, and D338 each contribute to the Mg(2+) site.

The protein belongs to the xylose isomerase family. Homotetramer. Mg(2+) is required as a cofactor.

The protein resides in the cytoplasm. It carries out the reaction alpha-D-xylose = alpha-D-xylulofuranose. The polypeptide is Xylose isomerase (Burkholderia vietnamiensis (strain G4 / LMG 22486) (Burkholderia cepacia (strain R1808))).